Here is a 32-residue protein sequence, read N- to C-terminus: Conotoxin pr6b (32 aa).

A 4-hydroxyproline mark is found at P6, P13, P20, and P29. Cystine bridges form between C7-C18, C14-C23, and C17-C31.

As to expression, expressed by the venom duct.

It localises to the secreted. In terms of biological role, intraperitoneal injection into fish (0.5 nmol) provokes vertical suspension and paralysis after 6 minutes. The polypeptide is Conotoxin pr6b (Conus parius (Cone snail)).